A 122-amino-acid polypeptide reads, in one-letter code: Phosphoribosyl-ATP pyrophosphatase (122 aa).

Belongs to the PRA-PH family.

Its subcellular location is the cytoplasm. The enzyme catalyses 1-(5-phospho-beta-D-ribosyl)-ATP + H2O = 1-(5-phospho-beta-D-ribosyl)-5'-AMP + diphosphate + H(+). It functions in the pathway amino-acid biosynthesis; L-histidine biosynthesis; L-histidine from 5-phospho-alpha-D-ribose 1-diphosphate: step 2/9. The chain is Phosphoribosyl-ATP pyrophosphatase from Cupriavidus metallidurans (strain ATCC 43123 / DSM 2839 / NBRC 102507 / CH34) (Ralstonia metallidurans).